The following is a 289-amino-acid chain: Coiled-coil domain-containing protein 137 (289 aa).

Disordered regions lie at residues 1 to 64 (MAGA…QEIP), 149 to 184 (EVQA…EKAA), and 204 to 225 (QPPE…GRRS). A compositionally biased stretch (low complexity) spans 7-20 (GAAVSRVQAGPGSP). Position 19 is a phosphoserine (serine 19). The stretch at 155 to 197 (KEKSEQKKAKKAFQKRRLDKVRRKKEEKAADRLEQELLRDTVK) forms a coiled coil. Residues 162–177 (KAKKAFQKRRLDKVRR) are compositionally biased toward basic residues. Serine 233 is modified (phosphoserine). A coiled-coil region spans residues 247-273 (RQRIVEEERERAVQAYRALKQRQQQLH). A disordered region spans residues 265-289 (LKQRQQQLHGERPHLTSRKKPEPQL). The segment covering 273–289 (HGERPHLTSRKKPEPQL) has biased composition (basic and acidic residues).

The protein localises to the chromosome. This chain is Coiled-coil domain-containing protein 137 (CCDC137), found in Homo sapiens (Human).